Consider the following 201-residue polypeptide: Holliday junction branch migration complex subunit RuvA (201 aa).

Residues 1–63 form a domain I region; that stretch reads MIGCLIGEVF…EDAQQLYGFI (63 aa). Positions 64 to 142 are domain II; sequence DAQEKLIFRT…ALSVQATTGS (79 aa). The interval 143–152 is flexible linker; sequence TVTSAQIQFS. Residues 152–201 are domain III; that stretch reads SSNSPIAEAEAALQSLGYKPIEAQKAIAAVKADYTEAADLIRAALKSMMK.

It belongs to the RuvA family. As to quaternary structure, homotetramer. Forms an RuvA(8)-RuvB(12)-Holliday junction (HJ) complex. HJ DNA is sandwiched between 2 RuvA tetramers; dsDNA enters through RuvA and exits via RuvB. An RuvB hexamer assembles on each DNA strand where it exits the tetramer. Each RuvB hexamer is contacted by two RuvA subunits (via domain III) on 2 adjacent RuvB subunits; this complex drives branch migration. In the full resolvosome a probable DNA-RuvA(4)-RuvB(12)-RuvC(2) complex forms which resolves the HJ.

It is found in the cytoplasm. The RuvA-RuvB-RuvC complex processes Holliday junction (HJ) DNA during genetic recombination and DNA repair, while the RuvA-RuvB complex plays an important role in the rescue of blocked DNA replication forks via replication fork reversal (RFR). RuvA specifically binds to HJ cruciform DNA, conferring on it an open structure. The RuvB hexamer acts as an ATP-dependent pump, pulling dsDNA into and through the RuvAB complex. HJ branch migration allows RuvC to scan DNA until it finds its consensus sequence, where it cleaves and resolves the cruciform DNA. The sequence is that of Holliday junction branch migration complex subunit RuvA from Acinetobacter baylyi (strain ATCC 33305 / BD413 / ADP1).